The chain runs to 21 residues: Dahlein-5.4 (21 aa).

In terms of tissue distribution, expressed by the skin dorsal glands.

Its subcellular location is the secreted. Its function is as follows. Has no antimicrobial activity. Strongly inhibits the formation of NO by neuronal nitric oxide synthase at micromolar concentrations. The polypeptide is Dahlein-5.4 (Ranoidea dahlii (Dahl's aquatic frog)).